A 376-amino-acid chain; its full sequence is Carbapenem antibiotics biosynthesis protein CarD (376 aa).

It belongs to the proline oxidase family.

It functions in the pathway antibiotic biosynthesis; carbapenem biosynthesis. The protein is Carbapenem antibiotics biosynthesis protein CarD (carD) of Pectobacterium carotovorum subsp. carotovorum (Erwinia carotovora subsp. carotovora).